The sequence spans 362 residues: Atypical chemokine receptor 3 (362 aa).

Residues 1–47 (MDVHLFDYVEPGNYSDINWPCNSSDCIVVDTVQCPAMPNKNVLLYTL) are Extracellular-facing. N-linked (GlcNAc...) asparagine glycosylation is found at asparagine 13 and asparagine 22. A helical membrane pass occupies residues 48–68 (SFIYIFIFVIGMIANSVVVWV). The Cytoplasmic segment spans residues 69 to 81 (NIQAKTTGYDTHC). The helical transmembrane segment at 82–102 (YILNLAIADLWVVITIPVWVV) threads the bilayer. Topologically, residues 103–118 (SLVQHNQWPMGELTCK) are extracellular. Cysteines 117 and 196 form a disulfide. Residues 119-139 (ITHLIFSINLFGSIFFLACMS) traverse the membrane as a helical segment. Topologically, residues 140 to 162 (VDRYLSITYFTSTSSYKKKMVRR) are cytoplasmic. The chain crosses the membrane as a helical span at residues 163-183 (VVCVLVWLLAFFVSLPDTYYL). At 184 to 213 (KTVTSASNNETYCRSFYPEHSIKEWLIGME) the chain is on the extracellular side. A helical membrane pass occupies residues 214 to 234 (LVSVILGFAVPFTIIAIFYFL). The Cytoplasmic portion of the chain corresponds to 235–252 (LARAMSASGDQEKHSSRK). The chain crosses the membrane as a helical span at residues 253–273 (IIFSYVVVFLVCWLPYHFVVL). The Extracellular portion of the chain corresponds to 274–296 (LDIFSILHYIPFTCQLENVLFTA). The helical transmembrane segment at 297–319 (LHVTQCLSLVHCCVNPVLYSFIN) threads the bilayer. Residues 320–362 (RNYRYELMKAFIFKYSAKTGLTKLIDASRVSETEYSALEQNTK) are Cytoplasmic-facing. Residues 324–362 (YELMKAFIFKYSAKTGLTKLIDASRVSETEYSALEQNTK) are C-terminal cytoplasmic tail. Residues serine 347, serine 350, and serine 355 each carry the phosphoserine modification.

This sequence belongs to the G-protein coupled receptor 1 family. Atypical chemokine receptor subfamily. As to quaternary structure, homodimer. Can form heterodimers with CXCR4; heterodimerization may regulate CXCR4 signaling activity. Interacts with ARRB1 and ARRB2. Post-translationally, the Ser/Thr residues in the C-terminal cytoplasmic tail may be phosphorylated. In terms of processing, ubiquitinated at the Lys residues in its C-terminal cytoplasmic tail and is essential for correct trafficking from and to the cell membrane. Deubiquitinated by CXCL12-stimulation in a reversible manner. In terms of tissue distribution, expressed in vascular smooth muscle cells (at protein level). In brain, expressed in blood vessels, pyramidal cells in hippocampal subfield CA3, mature dentate gyrus granule cells, ventricle walls, olfactory bulb, accumbens shell, supraoptic, lateroanterior and ventromedial hypothalamic nuclei, medial region of thalamus, and motor nuclei, central gray and raphe magnus nucleus of brain stem. Detected in primary neurons, GABAergic neurons, astrocytes, cerebral cortex, ventral striatum and choroid plexus. Not detected in mesencephalon.

The protein resides in the cell membrane. It is found in the early endosome. Its subcellular location is the recycling endosome. Functionally, atypical chemokine receptor that controls chemokine levels and localization via high-affinity chemokine binding that is uncoupled from classic ligand-driven signal transduction cascades, resulting instead in chemokine sequestration, degradation, or transcytosis. Also known as interceptor (internalizing receptor) or chemokine-scavenging receptor or chemokine decoy receptor. Acts as a receptor for chemokines CXCL11 and CXCL12/SDF1. Chemokine binding does not activate G-protein-mediated signal transduction but instead induces beta-arrestin recruitment, leading to ligand internalization and activation of MAPK signaling pathway. Required for regulation of CXCR4 protein levels in migrating interneurons, thereby adapting their chemokine responsiveness. In glioma cells, transduces signals via MEK/ERK pathway, mediating resistance to apoptosis. Promotes cell growth and survival. Not involved in cell migration, adhesion or proliferation of normal hematopoietic progenitors but activated by CXCL11 in malignant hemapoietic cells, leading to phosphorylation of ERK1/2 (MAPK3/MAPK1) and enhanced cell adhesion and migration. Plays a regulatory role in CXCR4-mediated activation of cell surface integrins by CXCL12. Required for heart valve development. Its function is as follows. Atypical chemokine receptor that controls chemokine levels and localization via high-affinity chemokine binding that is uncoupled from classic ligand-driven signal transduction cascades, resulting instead in chemokine sequestration, degradation, or transcytosis. Also known as interceptor (internalizing receptor) or chemokine-scavenging receptor or chemokine decoy receptor. Acts as a receptor for chemokines CXCL11 and CXCL12/SDF1. Chemokine binding does not activate G-protein-mediated signal transduction but instead induces beta-arrestin recruitment, leading to ligand internalization and activation of MAPK signaling pathway. Required for regulation of CXCR4 protein levels in migrating interneurons, thereby adapting their chemokine responsiveness. In glioma cells, transduces signals via MEK/ERK pathway, mediating resistance to apoptosis. Promotes cell growth and survival. Not involved in cell migration, adhesion or proliferation of normal hematopoietic progenitors but activated by CXCL11 in malignant hemapoietic cells, leading to phosphorylation of ERK1/2 (MAPK3/MAPK1) and enhanced cell adhesion and migration. Plays a regulatory role in CXCR4-mediated activation of cell surface integrins by CXCL12. Required for heart valve development. Regulates axon guidance in the oculomotor system through the regulation of CXCL12 levels. The sequence is that of Atypical chemokine receptor 3 from Rattus norvegicus (Rat).